The chain runs to 635 residues: Transaminated amino acid decarboxylase (635 aa).

Lys588 is covalently cross-linked (Glycyl lysine isopeptide (Lys-Gly) (interchain with G-Cter in ubiquitin)).

The protein belongs to the TPP enzyme family. Mg(2+) is required as a cofactor. The cofactor is thiamine diphosphate.

It localises to the cytoplasm. The catalysed reaction is 4-methyl-2-oxopentanoate + H(+) = 3-methylbutanal + CO2. It carries out the reaction (S)-3-methyl-2-oxopentanoate + H(+) = 2-methylbutanal + CO2. The enzyme catalyses indole-3-pyruvate + H(+) = indole-3-acetaldehyde + CO2. It catalyses the reaction 3-phenylpyruvate + H(+) = 2-phenylacetaldehyde + CO2. The catalysed reaction is 4-methylsulfanyl-2-oxobutanoate + H(+) = 3-methylsulfanylpropanal + CO2. It carries out the reaction 3-(4-hydroxyphenyl)pyruvate + H(+) = (4-hydroxyphenyl)acetaldehyde + CO2. Its pathway is amino-acid degradation; Ehrlich pathway. In terms of biological role, one of five 2-oxo acid decarboxylases (PDC1, PDC5, PDC6, ARO10, and THI3) involved in amino acid catabolism. The enzyme catalyzes the decarboxylation of amino acids, which, in a first step, have been transaminated to the corresponding 2-oxo acids (alpha-keto-acids). In a third step, the resulting aldehydes are reduced to alcohols, collectively referred to as fusel oils or alcohols. Its preferred substrates are the transaminated amino acids derived from phenylalanine (phenylpyruvate), tryptophan (3-(indol-3-yl)pyruvate), and probably tyrosine (4-hydroxyphenylpyruvate), but also isoleucine ((3S)-3-methyl-2-oxopentanoate, also alpha-keto-beta-methylvalerate) and methionine (4-methylthio-2-oxobutanoate), whereas transaminated leucine (4-methyl-2-oxopentanoate, also alpha-keto-isocaproate) is a low efficiency substrate and transaminated valine and pyruvate are no substrates. In analogy to the pyruvate decarboxylases the enzyme may in a side-reaction catalyze condensation (or carboligation) reactions leading to the formation of 2-hydroxy ketone, collectively called acyloins. This chain is Transaminated amino acid decarboxylase (ARO10), found in Saccharomyces cerevisiae (strain ATCC 204508 / S288c) (Baker's yeast).